Here is a 220-residue protein sequence, read N- to C-terminus: DNA replication complex GINS protein SLD5 (220 aa).

The protein belongs to the GINS4/SLD5 family. As to quaternary structure, component of the GINS complex. Interacts with EOL1 in the nucleus.

It is found in the nucleus. The GINS complex plays an essential role in the initiation of DNA replication. Required during embryogenesis. The polypeptide is DNA replication complex GINS protein SLD5 (Arabidopsis thaliana (Mouse-ear cress)).